A 196-amino-acid polypeptide reads, in one-letter code: Heat shock protein beta-8 (196 aa).

Residues 1 to 34 (MADGQMPFPCHYTSRRRRDPFRDSPLSSRLLDDG) are disordered. Over residues 23 to 34 (DSPLSSRLLDDG) the composition is skewed to low complexity. Ser-24 and Ser-57 each carry phosphoserine. Thr-63 is subject to Phosphothreonine. An asymmetric dimethylarginine mark is found at Arg-71 and Arg-78. A sHSP domain is found at 74–185 (TAMTRFGVPA…PFGESSFNNE (112 aa)). Residue Ser-87 is modified to Phosphoserine. The tract at residues 176–196 (PFGESSFNNELPQDGQEVTCT) is disordered. Residues 178–196 (GESSFNNELPQDGQEVTCT) are compositionally biased toward polar residues.

This sequence belongs to the small heat shock protein (HSP20) family. Monomer. Forms a ternary complex with BAG3 and HSPA1A. Component of the chaperone-assisted selective autophagy (CASA) complex consisting of BAG3, HSPA8/HSC70, HSPB8 and STUB1/CHIP. Interacts with HSPB1. Interacts with DNAJB6. Interacts with BAG3. Phosphorylated.

It is found in the cytoplasm. It localises to the nucleus. Its function is as follows. Involved in the chaperone-assisted selective autophagy (CASA), a crucial process for protein quality control, particularly in mechanical strained cells and tissues such as muscle. Displays temperature-dependent chaperone activity. The polypeptide is Heat shock protein beta-8 (HSPB8) (Bos taurus (Bovine)).